Here is a 261-residue protein sequence, read N- to C-terminus: Syntaxin-7 (261 aa).

Ser-2 carries the post-translational modification N-acetylserine. At 2–238 the chain is on the cytoplasmic side; the sequence is SYTPGIGGDS…DYQRKSRKTL (237 aa). At Thr-4 the chain carries Phosphothreonine. A Phosphoserine modification is found at Ser-45. The stretch at 47-68 forms a coiled coil; the sequence is ELRQLLQQKQQYTNQLAKETDK. At Ser-75 the chain carries Phosphoserine. Thr-79 bears the Phosphothreonine mark. Ser-125, Ser-126, Ser-129, and Ser-205 each carry phosphoserine. The segment at 128 to 148 is disordered; the sequence is VSGGFPEDSSKEKNLVSWESQ. Residues 165-227 form the t-SNARE coiled-coil homology domain; sequence LRLIHERESS…QQANQQLSRA (63 aa). A helical; Anchor for type IV membrane protein transmembrane segment spans residues 239–259; it reads CIIIFILVVRIVIICLIVWGL. The Vesicular portion of the chain corresponds to 260–261; it reads KG.

Belongs to the syntaxin family. As to quaternary structure, interacts with VPS11, VPS16 and VPS18. Interacts with VPS33A. Forms a SNARE complex with VTI1B, STX8 and VAMP8 which functions in the homotypic fusion of late endosomes. Component of the SNARE complex composed of STX7, STX8, VAMP7 and VTI1B that is required for heterotypic fusion of late endosomes with lysosomes. Interacts with TPC1.

The protein localises to the early endosome membrane. In terms of biological role, may be involved in protein trafficking from the plasma membrane to the early endosome (EE) as well as in homotypic fusion of endocytic organelles. Mediates the endocytic trafficking from early endosomes to late endosomes and lysosomes. The polypeptide is Syntaxin-7 (Stx7) (Mus musculus (Mouse)).